Here is a 138-residue protein sequence, read N- to C-terminus: Large ribosomal subunit protein uL16 (138 aa).

The protein belongs to the universal ribosomal protein uL16 family. Part of the 50S ribosomal subunit.

Binds 23S rRNA and is also seen to make contacts with the A and possibly P site tRNAs. This chain is Large ribosomal subunit protein uL16, found in Mycoplasmoides gallisepticum (strain R(low / passage 15 / clone 2)) (Mycoplasma gallisepticum).